The sequence spans 176 residues: Adenine phosphoribosyltransferase (176 aa).

It belongs to the purine/pyrimidine phosphoribosyltransferase family. As to quaternary structure, homodimer.

It is found in the cytoplasm. It carries out the reaction AMP + diphosphate = 5-phospho-alpha-D-ribose 1-diphosphate + adenine. Its pathway is purine metabolism; AMP biosynthesis via salvage pathway; AMP from adenine: step 1/1. Catalyzes a salvage reaction resulting in the formation of AMP, that is energically less costly than de novo synthesis. In Roseobacter denitrificans (strain ATCC 33942 / OCh 114) (Erythrobacter sp. (strain OCh 114)), this protein is Adenine phosphoribosyltransferase.